An 80-amino-acid polypeptide reads, in one-letter code: uncharacterized protein (80 aa).

This is an uncharacterized protein from Synechococcus sp. (strain PCC 6716).